The primary structure comprises 536 residues: Subtilisin-like proteinase Spm1 (536 aa).

The N-terminal stretch at 1-15 (MKSVILLSLAACAVA) is a signal peptide. The propeptide occupies 16–147 (APTAGVETIH…RYEEVKKDEC (132 aa)). The 94-residue stretch at 44-137 (YIIKFKKHVD…IERDTIVHTM (94 aa)) folds into the Inhibitor I9 domain. The Peptidase S8 domain maps to 156–462 (PWGLSRVSHR…GGCSNYFEIV (307 aa)). Active-site charge relay system residues include Asp-192 and His-224. N-linked (GlcNAc...) asparagine glycans are attached at residues Asn-254 and Asn-294. The active-site Charge relay system is Ser-390.

This sequence belongs to the peptidase S8 family.

The protein resides in the vacuole. The protein is Subtilisin-like proteinase Spm1 (SPM1) of Pyricularia oryzae (strain 70-15 / ATCC MYA-4617 / FGSC 8958) (Rice blast fungus).